A 607-amino-acid chain; its full sequence is Elongation factor 4 (607 aa).

One can recognise a tr-type G domain in the interval 11–193; it reads KSIRNFSIIA…QIVAKVPAPT (183 aa). Residues 23 to 28 and 140 to 143 contribute to the GTP site; these read DHGKST and NKID.

It belongs to the TRAFAC class translation factor GTPase superfamily. Classic translation factor GTPase family. LepA subfamily.

It is found in the cell membrane. It carries out the reaction GTP + H2O = GDP + phosphate + H(+). In terms of biological role, required for accurate and efficient protein synthesis under certain stress conditions. May act as a fidelity factor of the translation reaction, by catalyzing a one-codon backward translocation of tRNAs on improperly translocated ribosomes. Back-translocation proceeds from a post-translocation (POST) complex to a pre-translocation (PRE) complex, thus giving elongation factor G a second chance to translocate the tRNAs correctly. Binds to ribosomes in a GTP-dependent manner. In Exiguobacterium sibiricum (strain DSM 17290 / CCUG 55495 / CIP 109462 / JCM 13490 / 255-15), this protein is Elongation factor 4.